A 339-amino-acid polypeptide reads, in one-letter code: Dihydroorotate dehydrogenase (quinone) (339 aa).

FMN contacts are provided by residues 61–65 (AGLDK) and T85. Substrate is bound at residue K65. 110 to 114 (NRMGF) is a substrate binding site. 2 residues coordinate FMN: N138 and N171. N171 contributes to the substrate binding site. S174 serves as the catalytic Nucleophile. N176 provides a ligand contact to substrate. K216 and T244 together coordinate FMN. Residue 245-246 (NT) participates in substrate binding. FMN is bound by residues G267, G296, and 317–318 (YS).

This sequence belongs to the dihydroorotate dehydrogenase family. Type 2 subfamily. Monomer. The cofactor is FMN.

Its subcellular location is the cell membrane. It carries out the reaction (S)-dihydroorotate + a quinone = orotate + a quinol. It participates in pyrimidine metabolism; UMP biosynthesis via de novo pathway; orotate from (S)-dihydroorotate (quinone route): step 1/1. Functionally, catalyzes the conversion of dihydroorotate to orotate with quinone as electron acceptor. The protein is Dihydroorotate dehydrogenase (quinone) of Pseudomonas fluorescens (strain ATCC BAA-477 / NRRL B-23932 / Pf-5).